Here is a 119-residue protein sequence, read N- to C-terminus: MNLANYFPVLLFILVGIGVGLVPMFLGKILAPSKPDAEKLSPYECGFEAFEDARMKFDVRYYLIAILFILFDLETAFLFPWGVALRDIGWFGYASMVIFLLEFIVGFVYIWKKGALDWE.

A run of 3 helical transmembrane segments spans residues 7–27, 63–83, and 88–108; these read FPVL…MFLG, LIAI…PWGV, and IGWF…VGFV.

The protein belongs to the complex I subunit 3 family. As to quaternary structure, NDH-1 is composed of 14 different subunits. Subunits NuoA, H, J, K, L, M, N constitute the membrane sector of the complex.

It localises to the cell membrane. It carries out the reaction a quinone + NADH + 5 H(+)(in) = a quinol + NAD(+) + 4 H(+)(out). Its function is as follows. NDH-1 shuttles electrons from NADH, via FMN and iron-sulfur (Fe-S) centers, to quinones in the respiratory chain. The immediate electron acceptor for the enzyme in this species is believed to be ubiquinone. Couples the redox reaction to proton translocation (for every two electrons transferred, four hydrogen ions are translocated across the cytoplasmic membrane), and thus conserves the redox energy in a proton gradient. In Polynucleobacter asymbioticus (strain DSM 18221 / CIP 109841 / QLW-P1DMWA-1) (Polynucleobacter necessarius subsp. asymbioticus), this protein is NADH-quinone oxidoreductase subunit A.